The chain runs to 75 residues: Small ribosomal subunit protein bS16c (75 aa).

It belongs to the bacterial ribosomal protein bS16 family.

Its subcellular location is the plastid. The protein resides in the chloroplast. The chain is Small ribosomal subunit protein bS16c from Cyanidioschyzon merolae (strain NIES-3377 / 10D) (Unicellular red alga).